Reading from the N-terminus, the 435-residue chain is Adenylosuccinate synthetase (435 aa).

GTP-binding positions include 13-19 (GDEGKGK) and 41-43 (GHT). The Proton acceptor role is filled by aspartate 14. Aspartate 14 and glycine 41 together coordinate Mg(2+). Residues 14–17 (DEGK), 39–42 (NAGH), threonine 131, arginine 145, glutamine 226, threonine 241, and arginine 309 contribute to the IMP site. Histidine 42 acts as the Proton donor in catalysis. 305-311 (TVTGRKR) lines the substrate pocket. GTP is bound by residues arginine 311, 337–339 (KLD), and 419–421 (STG).

It belongs to the adenylosuccinate synthetase family. Homodimer. Mg(2+) serves as cofactor.

Its subcellular location is the cytoplasm. The catalysed reaction is IMP + L-aspartate + GTP = N(6)-(1,2-dicarboxyethyl)-AMP + GDP + phosphate + 2 H(+). It functions in the pathway purine metabolism; AMP biosynthesis via de novo pathway; AMP from IMP: step 1/2. Functionally, plays an important role in the de novo pathway of purine nucleotide biosynthesis. Catalyzes the first committed step in the biosynthesis of AMP from IMP. The sequence is that of Adenylosuccinate synthetase from Dechloromonas aromatica (strain RCB).